We begin with the raw amino-acid sequence, 327 residues long: Phenylalanine--tRNA ligase alpha subunit (327 aa).

Glu-252 serves as a coordination point for Mg(2+).

This sequence belongs to the class-II aminoacyl-tRNA synthetase family. Phe-tRNA synthetase alpha subunit type 1 subfamily. Tetramer of two alpha and two beta subunits. Mg(2+) is required as a cofactor.

Its subcellular location is the cytoplasm. It carries out the reaction tRNA(Phe) + L-phenylalanine + ATP = L-phenylalanyl-tRNA(Phe) + AMP + diphosphate + H(+). In Yersinia pseudotuberculosis serotype O:1b (strain IP 31758), this protein is Phenylalanine--tRNA ligase alpha subunit.